The sequence spans 293 residues: Probable endonuclease 4 (293 aa).

Zn(2+) is bound by residues His75, His115, Glu153, Asp187, His190, His224, Asp237, His239, and Glu269.

Belongs to the AP endonuclease 2 family. Zn(2+) is required as a cofactor.

The enzyme catalyses Endonucleolytic cleavage to 5'-phosphooligonucleotide end-products.. Its function is as follows. Endonuclease IV plays a role in DNA repair. It cleaves phosphodiester bonds at apurinic or apyrimidinic (AP) sites, generating a 3'-hydroxyl group and a 5'-terminal sugar phosphate. The chain is Probable endonuclease 4 from Chlamydia pneumoniae (Chlamydophila pneumoniae).